A 198-amino-acid chain; its full sequence is Superoxide dismutase [Mn], mitochondrial (198 aa).

His-26 provides a ligand contact to Mn(2+). Position 34 is a 3'-nitrotyrosine (Tyr-34). Residues Lys-44 and Lys-51 each carry the N6-acetyllysine; alternate modification. N6-succinyllysine; alternate occurs at positions 44 and 51. A Mn(2+)-binding site is contributed by His-74. N6-acetyllysine is present on Lys-90. N6-acetyllysine; alternate occurs at positions 98 and 106. N6-succinyllysine; alternate occurs at positions 98 and 106. Mn(2+) is bound by residues Asp-159 and His-163. The residue at position 178 (Lys-178) is an N6-acetyllysine.

Belongs to the iron/manganese superoxide dismutase family. Homotetramer. Mn(2+) is required as a cofactor. Post-translationally, nitrated under oxidative stress. Nitration coupled with oxidation inhibits the catalytic activity. Acetylation at Lys-98 decreases enzymatic activity. Deacetylated by SIRT3 upon exposure to ionizing radiations or after long fasting. In terms of processing, polyubiquitinated; leading to proteasomal degradation. Deubiquitinated by USP36 which increases protein stability.

The protein resides in the mitochondrion matrix. It carries out the reaction 2 superoxide + 2 H(+) = H2O2 + O2. Destroys superoxide anion radicals which are normally produced within the cells and which are toxic to biological systems. This Callithrix jacchus (White-tufted-ear marmoset) protein is Superoxide dismutase [Mn], mitochondrial (SOD2).